We begin with the raw amino-acid sequence, 887 residues long: UPF0182 protein CTC_00086 (887 aa).

Helical transmembrane passes span 9–29 (FIAI…SFII), 47–67 (FFTI…SIWL), 87–107 (LMIA…SSKY), 146–166 (VLIL…YFII), 195–215 (GKQL…GYII), 242–262 (IYRI…ISII), and 266–286 (IKPI…EGAT).

The protein belongs to the UPF0182 family.

The protein resides in the cell membrane. In Clostridium tetani (strain Massachusetts / E88), this protein is UPF0182 protein CTC_00086.